The sequence spans 195 residues: MSGNIYMDIIASQVSQGNFGGKNGQFGYLAKDKSRREKKLTKETKFEAPKKKVEEKFECNVFIGSGTAKSTDSNGLSDPFVIIWSVDAEGQPDKSLFKSKVCKKTLTPNWDEKGTLKLKESYKSLIVELWDHDLLTANDFIGRARINVDAINIKKYSYTFKDTISVYDGEISTPSGTVYIEITNSSSTKSFSSCA.

Residues 38–161 enclose the C2 domain; sequence KKLTKETKFE…NIKKYSYTFK (124 aa). Residues Asp-72, Asp-78, Asp-131, Asp-133, and Asp-139 each coordinate Ca(2+).

Requires Ca(2+) as cofactor.

In Dictyostelium discoideum (Social amoeba), this protein is C2 domain-containing protein DDB_G0290753.